The following is a 429-amino-acid chain: Adenylosuccinate synthetase (429 aa).

GTP is bound by residues 12–18 (GDEGKGK) and 40–42 (GHT). The Proton acceptor role is filled by Asp13. Mg(2+) is bound by residues Asp13 and Gly40. Residues 13–16 (DEGK), 38–41 (NAGH), Thr128, Arg142, Gln223, Thr238, and Arg302 contribute to the IMP site. Residue His41 is the Proton donor of the active site. 298 to 304 (TTTGRPR) contacts substrate. GTP contacts are provided by residues Arg304, 330 to 332 (SID), and 412 to 414 (SVG).

The protein belongs to the adenylosuccinate synthetase family. In terms of assembly, homodimer. The cofactor is Mg(2+).

The protein resides in the cytoplasm. It catalyses the reaction IMP + L-aspartate + GTP = N(6)-(1,2-dicarboxyethyl)-AMP + GDP + phosphate + 2 H(+). Its pathway is purine metabolism; AMP biosynthesis via de novo pathway; AMP from IMP: step 1/2. In terms of biological role, plays an important role in the de novo pathway of purine nucleotide biosynthesis. Catalyzes the first committed step in the biosynthesis of AMP from IMP. The sequence is that of Adenylosuccinate synthetase from Bacillus cereus (strain ZK / E33L).